A 179-amino-acid chain; its full sequence is Large ribosomal subunit protein uL5 (179 aa).

The protein belongs to the universal ribosomal protein uL5 family. As to quaternary structure, part of the 50S ribosomal subunit; part of the 5S rRNA/L5/L18/L25 subcomplex. Contacts the 5S rRNA and the P site tRNA. Forms a bridge to the 30S subunit in the 70S ribosome.

Functionally, this is one of the proteins that bind and probably mediate the attachment of the 5S RNA into the large ribosomal subunit, where it forms part of the central protuberance. In the 70S ribosome it contacts protein S13 of the 30S subunit (bridge B1b), connecting the 2 subunits; this bridge is implicated in subunit movement. Contacts the P site tRNA; the 5S rRNA and some of its associated proteins might help stabilize positioning of ribosome-bound tRNAs. The sequence is that of Large ribosomal subunit protein uL5 from Buchnera aphidicola subsp. Schizaphis graminum (strain Sg).